A 252-amino-acid chain; its full sequence is Small ribosomal subunit protein uS2 (252 aa).

It belongs to the universal ribosomal protein uS2 family. As to quaternary structure, component of the small ribosomal subunit. Mature ribosomes consist of a small (40S) and a large (60S) subunit. The 40S subunit contains about 33 different proteins and 1 molecule of RNA (18S). The 60S subunit contains about 49 different proteins and 3 molecules of RNA (25S, 5.8S and 5S). Interacts with RPS21.

The protein resides in the cytoplasm. Required for the assembly and/or stability of the 40S ribosomal subunit. Required for the processing of the 20S rRNA-precursor to mature 18S rRNA in a late step of the maturation of 40S ribosomal subunits. In Encephalitozoon cuniculi (strain GB-M1) (Microsporidian parasite), this protein is Small ribosomal subunit protein uS2.